Reading from the N-terminus, the 259-residue chain is Ribonuclease HII (259 aa).

The region spanning 70-258 (TLIAGIDEVG…VKSLVLGKKE (189 aa)) is the RNase H type-2 domain. A divalent metal cation is bound by residues aspartate 76, glutamate 77, and aspartate 168.

This sequence belongs to the RNase HII family. The cofactor is Mn(2+). Requires Mg(2+) as cofactor.

The protein localises to the cytoplasm. It carries out the reaction Endonucleolytic cleavage to 5'-phosphomonoester.. Endonuclease that specifically degrades the RNA of RNA-DNA hybrids. The protein is Ribonuclease HII of Streptococcus pneumoniae (strain P1031).